The sequence spans 690 residues: DNA topoisomerase 1 (690 aa).

The 119-residue stretch at 3–121 folds into the Toprim domain; sequence DYLVIVESPA…EITKQAIKDA (119 aa). Residues glutamate 9 and aspartate 82 each contribute to the Mg(2+) site. The 430-residue stretch at 129 to 558 folds into the Topo IA-type catalytic domain; the sequence is NMDLVDAQQA…DFYKGFEERL (430 aa). Residues 163–168 form an interaction with DNA region; that stretch reads SAGRVQ. Tyrosine 298 functions as the O-(5'-phospho-DNA)-tyrosine intermediate in the catalytic mechanism. The interval 329-354 is disordered; sequence NGTKAVKKDKKSQDAHEAIRPTSVER. Basic and acidic residues predominate over residues 339–354; that stretch reads KSQDAHEAIRPTSVER. 3 C4-type zinc fingers span residues 579 to 605, 619 to 647, and 660 to 683; these read CEKC…FPDC, CPKC…YPEC, and CPKC…CSSC.

It belongs to the type IA topoisomerase family. Monomer. It depends on Mg(2+) as a cofactor.

The catalysed reaction is ATP-independent breakage of single-stranded DNA, followed by passage and rejoining.. In terms of biological role, releases the supercoiling and torsional tension of DNA, which is introduced during the DNA replication and transcription, by transiently cleaving and rejoining one strand of the DNA duplex. Introduces a single-strand break via transesterification at a target site in duplex DNA. The scissile phosphodiester is attacked by the catalytic tyrosine of the enzyme, resulting in the formation of a DNA-(5'-phosphotyrosyl)-enzyme intermediate and the expulsion of a 3'-OH DNA strand. The free DNA strand then undergoes passage around the unbroken strand, thus removing DNA supercoils. Finally, in the religation step, the DNA 3'-OH attacks the covalent intermediate to expel the active-site tyrosine and restore the DNA phosphodiester backbone. In Halalkalibacterium halodurans (strain ATCC BAA-125 / DSM 18197 / FERM 7344 / JCM 9153 / C-125) (Bacillus halodurans), this protein is DNA topoisomerase 1.